Consider the following 251-residue polypeptide: Hydroxyacylglutathione hydrolase (251 aa).

Positions 53, 55, 57, 58, 110, 127, and 165 each coordinate Zn(2+).

The protein belongs to the metallo-beta-lactamase superfamily. Glyoxalase II family. As to quaternary structure, monomer. Zn(2+) serves as cofactor.

It carries out the reaction an S-(2-hydroxyacyl)glutathione + H2O = a 2-hydroxy carboxylate + glutathione + H(+). It functions in the pathway secondary metabolite metabolism; methylglyoxal degradation; (R)-lactate from methylglyoxal: step 2/2. Its function is as follows. Thiolesterase that catalyzes the hydrolysis of S-D-lactoyl-glutathione to form glutathione and D-lactic acid. The protein is Hydroxyacylglutathione hydrolase of Salmonella agona (strain SL483).